A 261-amino-acid polypeptide reads, in one-letter code: Phosphoadenosine phosphosulfate reductase (261 aa).

It belongs to the PAPS reductase family. CysH subfamily.

The enzyme catalyses [thioredoxin]-disulfide + sulfite + adenosine 3',5'-bisphosphate + 2 H(+) = [thioredoxin]-dithiol + 3'-phosphoadenylyl sulfate. It participates in sulfur metabolism; hydrogen sulfide biosynthesis; sulfite from sulfate: step 3/3. In terms of biological role, the NADP dependent reduction of PAPS into sulfite involves thioredoxin which probably plays the role of a thiol carrier. The protein is Phosphoadenosine phosphosulfate reductase (MET16) of Saccharomyces cerevisiae (strain ATCC 204508 / S288c) (Baker's yeast).